The sequence spans 217 residues: Biotin transport regulator (217 aa).

The disordered stretch occupies residues 14–49 (GDGLGNLAGRSADPTGAADKGESGVPVPPTGFVDPT).

In terms of biological role, may be part of a system that R.meliloti uses to respond to plant (alfalfa) biotin signals. The polypeptide is Biotin transport regulator (bioS) (Rhizobium meliloti (strain 1021) (Ensifer meliloti)).